The sequence spans 230 residues: Mitochondrial intermembrane space import and assembly protein 40 (230 aa).

Residues 1-18 (MFARSFSNASRTIARRSL) constitute a mitochondrion transit peptide. Residues 1–22 (MFARSFSNASRTIARRSLSTRS) show a composition bias toward polar residues. The disordered stretch occupies residues 1-30 (MFARSFSNASRTIARRSLSTRSGPAPSSLW). Residues 19–34 (STRSGPAPSSLWSSRN) are Mitochondrial matrix-facing. A helical; Signal-anchor for type II membrane protein membrane pass occupies residues 35–51 (AVIAGTTLAITALAVTS). Residues 52-230 (ERRKVFNESA…EETAAPAAAP (179 aa)) are Mitochondrial intermembrane-facing. Residues 58–111 (NESAQKATSPRDSIIAQDSLKENVHKKSVRQDEFSGESTKPEASTSSDSVEKAA) form a disordered region. Residues 59 to 68 (ESAQKATSPR) are compositionally biased toward polar residues. Over residues 76–90 (SLKENVHKKSVRQDE) the composition is skewed to basic and acidic residues. A compositionally biased stretch (polar residues) spans 93–105 (GESTKPEASTSSD). Disulfide bonds link C144/C146, C155/C188, and C165/C178. Residues 152–196 (TGPCGEQFKAAFSCFVYSEAEPKGVDCVELFKVMQDCFREHPEIY) form the CHCH domain. 2 consecutive short sequence motifs (cx9C motif) follow at residues 155 to 165 (CGEQFKAAFSC) and 178 to 188 (CVELFKVMQDC). Positions 195–230 (IYGEEIDDDEAPAQEGTMEEKVEAAKEETAAPAAAP) are disordered. A compositionally biased stretch (acidic residues) spans 196–206 (YGEEIDDDEAP). A compositionally biased stretch (basic and acidic residues) spans 212-223 (MEEKVEAAKEET).

As to quaternary structure, monomer. Cu(2+) is required as a cofactor. Requires Zn(2+) as cofactor.

It is found in the mitochondrion inner membrane. Required for the import and folding of small cysteine-containing proteins (small Tim) in the mitochondrial intermembrane space (IMS). Forms a redox cycle with ERV1 that involves a disulfide relay system. Precursor proteins to be imported into the IMS are translocated in their reduced form into the mitochondria. The oxidized form of MIA40 forms a transient intermolecular disulfide bridge with the reduced precursor protein, resulting in oxidation of the precursor protein that now contains an intramolecular disulfide bond and is able to undergo folding in the IMS. This is Mitochondrial intermembrane space import and assembly protein 40 (MIA40) from Cryptococcus neoformans var. neoformans serotype D (strain JEC21 / ATCC MYA-565) (Filobasidiella neoformans).